We begin with the raw amino-acid sequence, 136 residues long: Large ribosomal subunit protein uL16 (136 aa).

The protein belongs to the universal ribosomal protein uL16 family. In terms of assembly, part of the 50S ribosomal subunit.

Binds 23S rRNA and is also seen to make contacts with the A and possibly P site tRNAs. The protein is Large ribosomal subunit protein uL16 of Haemophilus ducreyi (strain 35000HP / ATCC 700724).